We begin with the raw amino-acid sequence, 889 residues long: DNA gyrase subunit A (889 aa).

Residues 35 to 501 (LPDVRDGLKP…GFEDLEDEDL (467 aa)) enclose the Topo IIA-type catalytic domain. The active-site O-(5'-phospho-DNA)-tyrosine intermediate is Tyr-123. The GyrA-box motif lies at 528–534 (QNRGGRG). The tract at residues 811–889 (KEDAEDETNE…IQQSSDEDEE (79 aa)) is disordered. Over residues 813-823 (DAEDETNEDEQ) the composition is skewed to acidic residues. Basic and acidic residues predominate over residues 863 to 875 (DGRIEVRQDFMDR). Residues 876–889 (VEEDIQQSSDEDEE) are compositionally biased toward acidic residues.

Belongs to the type II topoisomerase GyrA/ParC subunit family. As to quaternary structure, heterotetramer, composed of two GyrA and two GyrB chains. In the heterotetramer, GyrA contains the active site tyrosine that forms a transient covalent intermediate with DNA, while GyrB binds cofactors and catalyzes ATP hydrolysis.

It localises to the cytoplasm. The enzyme catalyses ATP-dependent breakage, passage and rejoining of double-stranded DNA.. Its function is as follows. A type II topoisomerase that negatively supercoils closed circular double-stranded (ds) DNA in an ATP-dependent manner to modulate DNA topology and maintain chromosomes in an underwound state. Negative supercoiling favors strand separation, and DNA replication, transcription, recombination and repair, all of which involve strand separation. Also able to catalyze the interconversion of other topological isomers of dsDNA rings, including catenanes and knotted rings. Type II topoisomerases break and join 2 DNA strands simultaneously in an ATP-dependent manner. This Staphylococcus aureus (strain Mu50 / ATCC 700699) protein is DNA gyrase subunit A.